Here is a 94-residue protein sequence, read N- to C-terminus: C-X-C motif chemokine 11-1 (94 aa).

The first 19 residues, Met1–Gly19, serve as a signal peptide directing secretion. Disulfide bonds link Cys27/Cys54 and Cys29/Cys71.

Belongs to the intercrine alpha (chemokine CxC) family.

It is found in the secreted. Functionally, ligand for cxcr3.2. Chemotactic for macrophages. In Danio rerio (Zebrafish), this protein is C-X-C motif chemokine 11-1 (cxcl11.1).